Here is a 218-residue protein sequence, read N- to C-terminus: Autophagy-related protein 101 (218 aa).

Residues 152 to 156 are important for interaction with ATG13; it reads IINIV.

It belongs to the ATG101 family. Interacts with ATG13. Associates with a complex composed of ATG13, ULK1 and RB1CC1; the association with this complex requires the presence of ATG13.

The protein localises to the cytoplasm. The protein resides in the preautophagosomal structure. In terms of biological role, autophagy factor required for autophagosome formation. Stabilizes ATG13, protecting it from proteasomal degradation. The chain is Autophagy-related protein 101 (ATG101) from Bos taurus (Bovine).